A 441-amino-acid polypeptide reads, in one-letter code: Glutamate-1-semialdehyde 2,1-aminomutase (441 aa).

The residue at position 276 (lysine 276) is an N6-(pyridoxal phosphate)lysine.

This sequence belongs to the class-III pyridoxal-phosphate-dependent aminotransferase family. HemL subfamily. Homodimer. The cofactor is pyridoxal 5'-phosphate.

The protein localises to the cytoplasm. The enzyme catalyses (S)-4-amino-5-oxopentanoate = 5-aminolevulinate. It participates in porphyrin-containing compound metabolism; protoporphyrin-IX biosynthesis; 5-aminolevulinate from L-glutamyl-tRNA(Glu): step 2/2. This Rhodococcus jostii (strain RHA1) protein is Glutamate-1-semialdehyde 2,1-aminomutase.